A 311-amino-acid chain; its full sequence is Malate dehydrogenase (311 aa).

NAD(+)-binding positions include 7–13 (GAAGGIG) and aspartate 34. 2 residues coordinate substrate: arginine 81 and arginine 87. Residues asparagine 94 and 117–119 (ITN) contribute to the NAD(+) site. 2 residues coordinate substrate: asparagine 119 and arginine 153. Histidine 177 acts as the Proton acceptor in catalysis. Methionine 227 lines the NAD(+) pocket.

It belongs to the LDH/MDH superfamily. MDH type 1 family. In terms of assembly, homodimer.

The catalysed reaction is (S)-malate + NAD(+) = oxaloacetate + NADH + H(+). In terms of biological role, catalyzes the reversible oxidation of malate to oxaloacetate. In Shewanella woodyi (strain ATCC 51908 / MS32), this protein is Malate dehydrogenase.